The sequence spans 348 residues: Hereditary hemochromatosis protein homolog (348 aa).

Positions 1-22 (MGPRARPALFFLILLRTVAAQG) are cleaved as a signal peptide. Residues 23–114 (RPPRSHSLRY…IMDNHNHSKE (92 aa)) are alpha-1. Residues 23 to 306 (RPPRSHSLRY…WEPSLSNTLV (284 aa)) lie on the Extracellular side of the membrane. Residues Asn-110, Asn-130, and Asn-234 are each glycosylated (N-linked (GlcNAc...) asparagine). An alpha-2 region spans residues 115–205 (SHTLQVILGC…ELGRGVLDQQ (91 aa)). Disulfide bonds link Cys-124-Cys-187 and Cys-225-Cys-282. An alpha-3 region spans residues 206–297 (VPPLVKVTHH…GLDQPLTATW (92 aa)). An Ig-like C1-type domain is found at 207 to 296 (PPLVKVTHHV…PGLDQPLTAT (90 aa)). The tract at residues 298 to 306 (EPSLSNTLV) is connecting peptide. Residues 307–330 (TGVISGIAVCVIIFLIGILFRILR) traverse the membrane as a helical segment. Over 331–348 (KRQASRGAMGDYVLAECE) the chain is Cytoplasmic.

Belongs to the MHC class I family. As to quaternary structure, binds TFR through the extracellular domain in a pH-dependent manner.

The protein resides in the cell membrane. Its function is as follows. Binds to transferrin receptor (TFR) and reduces its affinity for iron-loaded transferrin. The sequence is that of Hereditary hemochromatosis protein homolog (HFE) from Dicerorhinus sumatrensis (Sumatran rhinoceros).